We begin with the raw amino-acid sequence, 701 residues long: Polyribonucleotide nucleotidyltransferase (701 aa).

Positions 485 and 491 each coordinate Mg(2+). The KH domain occupies 552-611 (PRIIKIRINPEKIRDVIGKGGAVIRALTEETGTTIDITDDGTVMIACVNAEGGELAKKRI). The S1 motif domain occupies 621–689 (GRVYDGTVLK…DKGRLRLSMK (69 aa)).

This sequence belongs to the polyribonucleotide nucleotidyltransferase family. Mg(2+) serves as cofactor.

The protein resides in the cytoplasm. The enzyme catalyses RNA(n+1) + phosphate = RNA(n) + a ribonucleoside 5'-diphosphate. Functionally, involved in mRNA degradation. Catalyzes the phosphorolysis of single-stranded polyribonucleotides processively in the 3'- to 5'-direction. In Nitrosospira multiformis (strain ATCC 25196 / NCIMB 11849 / C 71), this protein is Polyribonucleotide nucleotidyltransferase.